Consider the following 195-residue polypeptide: HTH-type transcriptional regulator BetI (195 aa).

Residues 8–68 (SIRRRQLIDA…ATMRDITSQL (61 aa)) enclose the HTH tetR-type domain. Positions 31–50 (TIAQIARRAGVSTGIISHYF) form a DNA-binding region, H-T-H motif.

Its pathway is amine and polyamine biosynthesis; betaine biosynthesis via choline pathway [regulation]. Its function is as follows. Repressor involved in the biosynthesis of the osmoprotectant glycine betaine. It represses transcription of the choline transporter BetT and the genes of BetAB involved in the synthesis of glycine betaine. This is HTH-type transcriptional regulator BetI from Escherichia coli O157:H7.